The primary structure comprises 109 residues: Large ribosomal subunit protein uL22 (109 aa).

Belongs to the universal ribosomal protein uL22 family. Part of the 50S ribosomal subunit.

Functionally, this protein binds specifically to 23S rRNA; its binding is stimulated by other ribosomal proteins, e.g. L4, L17, and L20. It is important during the early stages of 50S assembly. It makes multiple contacts with different domains of the 23S rRNA in the assembled 50S subunit and ribosome. Its function is as follows. The globular domain of the protein is located near the polypeptide exit tunnel on the outside of the subunit, while an extended beta-hairpin is found that lines the wall of the exit tunnel in the center of the 70S ribosome. The sequence is that of Large ribosomal subunit protein uL22 from Paraburkholderia xenovorans (strain LB400).